Here is a 445-residue protein sequence, read N- to C-terminus: Probable glycine dehydrogenase (decarboxylating) subunit 1 (445 aa).

This sequence belongs to the GcvP family. N-terminal subunit subfamily. The glycine cleavage system is composed of four proteins: P, T, L and H. In this organism, the P 'protein' is a heterodimer of two subunits.

The catalysed reaction is N(6)-[(R)-lipoyl]-L-lysyl-[glycine-cleavage complex H protein] + glycine + H(+) = N(6)-[(R)-S(8)-aminomethyldihydrolipoyl]-L-lysyl-[glycine-cleavage complex H protein] + CO2. Functionally, the glycine cleavage system catalyzes the degradation of glycine. The P protein binds the alpha-amino group of glycine through its pyridoxal phosphate cofactor; CO(2) is released and the remaining methylamine moiety is then transferred to the lipoamide cofactor of the H protein. The protein is Probable glycine dehydrogenase (decarboxylating) subunit 1 of Chlorobium chlorochromatii (strain CaD3).